Here is a 318-residue protein sequence, read N- to C-terminus: Olfactory receptor-like protein COR1 (318 aa).

Residues 1 to 26 lie on the Extracellular side of the membrane; sequence MASGNCTTPTTFILSGLTDNPGLQMP. N5 carries an N-linked (GlcNAc...) asparagine glycan. The helical transmembrane segment at 27–49 threads the bilayer; it reads LFMVFLAIYTITLLTNLGLIALI. Residues 50 to 57 are Cytoplasmic-facing; sequence SVDLHLQT. A helical membrane pass occupies residues 58–79; it reads PMYIFLQNLSFTDAAYSTVITP. At 80–100 the chain is on the extracellular side; sequence KMLATFLEERKTISYVGCILQ. A disulfide bond links C97 and C179. Residues 101–120 traverse the membrane as a helical segment; it reads YFSFVLLTVTESLLLAVMAY. The Cytoplasmic portion of the chain corresponds to 121 to 139; it reads DRYVAICKPLLYPSIMTKA. Residues 140 to 164 traverse the membrane as a helical segment; it reads VCWRLVESLYFLAFLNSLVHTSGLL. The Extracellular segment spans residues 165-205; the sequence is KLSFCYSNVVNHFFCDISPLFQISSSSIAISELLVIISGSL. Residues 206–226 form a helical membrane-spanning segment; sequence FVMSSIIIILISYVFIILTVV. At 227-239 the chain is on the cytoplasmic side; sequence MIRSKDGKYKAFS. Residues 240–260 traverse the membrane as a helical segment; the sequence is TCTSHLMAVSLFHGTVIFMYL. The Extracellular segment spans residues 261-271; sequence RPVKLFSLDTD. Residues 272–292 form a helical membrane-spanning segment; sequence KIASLFYTVVIPMLNPLIYSW. At 293–318 the chain is on the cytoplasmic side; it reads RNKEVKDALRRLTATTFGFIDSKAVQ.

It belongs to the G-protein coupled receptor 1 family.

Its subcellular location is the cell membrane. Functionally, odorant receptor. This chain is Olfactory receptor-like protein COR1 (COR1), found in Gallus gallus (Chicken).